A 643-amino-acid chain; its full sequence is Hypoxia up-regulated protein 1 (643 aa).

Positions 1–22 (MRPLVCVFTMFLLALLSSNTES) are cleaved as a signal peptide. Positions 565–643 (LGNTISSLFG…EEEKSEPQEE (79 aa)) are disordered. The span at 590 to 610 (VQEEDEVPTEPTKEEEQESAD) shows a compositional bias: acidic residues. Composition is skewed to basic and acidic residues over residues 611–621 (AADKQKDKEKG) and 630–643 (EGKK…PQEE).

It belongs to the heat shock protein 70 family.

It is found in the endoplasmic reticulum lumen. Has a pivotal role in cytoprotective cellular mechanisms triggered by oxygen deprivation. May play a role as a molecular chaperone and participate in protein folding. The sequence is that of Hypoxia up-regulated protein 1 (hyou1) from Xenopus tropicalis (Western clawed frog).